Reading from the N-terminus, the 223-residue chain is Small ribosomal subunit protein uS3 (223 aa).

Residues 38 to 106 (IREFIAKQLT…RVHINIVEIK (69 aa)) enclose the KH type-2 domain.

It belongs to the universal ribosomal protein uS3 family. In terms of assembly, part of the 30S ribosomal subunit. Forms a tight complex with proteins S10 and S14.

Functionally, binds the lower part of the 30S subunit head. Binds mRNA in the 70S ribosome, positioning it for translation. The polypeptide is Small ribosomal subunit protein uS3 (Pediococcus pentosaceus (strain ATCC 25745 / CCUG 21536 / LMG 10740 / 183-1w)).